We begin with the raw amino-acid sequence, 331 residues long: UBX domain-containing protein 2B (331 aa).

2 disordered regions span residues 1 to 26 (MAEGGGAEPEEQERRSSRPRPPSARD) and 38 to 63 (EMKCKSSKPDRSTATAFKSPRTPPLR). A2 is modified (N-acetylalanine). A compositionally biased stretch (basic and acidic residues) spans 38–48 (EMKCKSSKPDR). S56 carries the phosphoserine modification. At T59 the chain carries Phosphothreonine. S66 is subject to Phosphoserine. The 66-residue stretch at 141-206 (DVQILLRLWS…MEDHQDQEYI (66 aa)) folds into the SEP domain. Phosphoserine is present on residues S231, S234, and S235. The UBX domain occupies 252 to 329 (DSVPTTKIQI…DILNTVILQQ (78 aa)).

Belongs to the NSFL1C family. In terms of assembly, interacts with VCP. Does not bind ubiquitin. As to expression, present at high level in brain. Also present in liver, kidney, spleen, testis, lung and heart (at protein level).

It localises to the nucleus. The protein localises to the cytoplasm. The protein resides in the cytosol. Its subcellular location is the endoplasmic reticulum. It is found in the golgi apparatus. It localises to the cytoskeleton. The protein localises to the microtubule organizing center. The protein resides in the centrosome. Adapter protein required for Golgi and endoplasmic reticulum biogenesis. Involved in Golgi and endoplasmic reticulum maintenance during interphase and in their reassembly at the end of mitosis. The complex formed with VCP has membrane fusion activity; membrane fusion activity requires USO1-GOLGA2 tethering and BET1L. VCPIP1 is also required, but not its deubiquitinating activity. Together with NSFL1C/p47, regulates the centrosomal levels of kinase AURKA/Aurora A during mitotic progression by promoting AURKA removal from centrosomes in prophase. Also, regulates spindle orientation during mitosis. The polypeptide is UBX domain-containing protein 2B (Ubxn2b) (Rattus norvegicus (Rat)).